We begin with the raw amino-acid sequence, 151 residues long: Large-conductance mechanosensitive channel (151 aa).

3 consecutive transmembrane segments (helical) span residues 14–34, 38–58, and 86–106; these read VVDMAVGIIVGGAFGTIVNTL, VLMPPLGLLIGGVDFTNLYLI, and GLFLNSVISFLIMAFAVFLLV.

It belongs to the MscL family. In terms of assembly, homopentamer.

Its subcellular location is the cell inner membrane. Channel that opens in response to stretch forces in the membrane lipid bilayer. May participate in the regulation of osmotic pressure changes within the cell. The sequence is that of Large-conductance mechanosensitive channel from Pelodictyon phaeoclathratiforme (strain DSM 5477 / BU-1).